An 88-amino-acid polypeptide reads, in one-letter code: Small ribosomal subunit protein bS20 (88 aa).

Residues 1 to 27 (MANIPSAKKRARQAEKRRKHNQSQRSM) are disordered. Positions 7-22 (AKKRARQAEKRRKHNQ) are enriched in basic residues.

This sequence belongs to the bacterial ribosomal protein bS20 family.

Functionally, binds directly to 16S ribosomal RNA. The polypeptide is Small ribosomal subunit protein bS20 (Alkalilimnicola ehrlichii (strain ATCC BAA-1101 / DSM 17681 / MLHE-1)).